A 282-amino-acid polypeptide reads, in one-letter code: Undecaprenyl-diphosphatase (282 aa).

The next 7 helical transmembrane spans lie at 40–60 (GAAF…IYFF), 85–105 (AKMG…GLLF), 117–137 (YWIS…EWLI), 158–178 (ALII…RSGV), 193–213 (AARF…IYQL), 231–251 (IVAT…LITF), and 258–278 (AVFI…IATG).

The protein belongs to the UppP family.

It localises to the cell inner membrane. It catalyses the reaction di-trans,octa-cis-undecaprenyl diphosphate + H2O = di-trans,octa-cis-undecaprenyl phosphate + phosphate + H(+). In terms of biological role, catalyzes the dephosphorylation of undecaprenyl diphosphate (UPP). Confers resistance to bacitracin. This Prosthecochloris aestuarii (strain DSM 271 / SK 413) protein is Undecaprenyl-diphosphatase.